The sequence spans 250 residues: Golgi SNAP receptor complex member 1 (250 aa).

An N-acetylalanine modification is found at Ala2. Residues Ala2–Asp229 lie on the Cytoplasmic side of the membrane. The stretch at Glu10–Phe30 forms a coiled coil. A disordered region spans residues His39–Asn59. Basic and acidic residues predominate over residues Ser41–Ser51. Residues Met70–Ser93 adopt a coiled-coil conformation. A Phosphoserine modification is found at Ser141. The chain crosses the membrane as a helical; Anchor for type IV membrane protein span at residues Ser230 to His250.

Belongs to the GOSR1 family. Component of several multiprotein Golgi SNARE complexes. Identified in a SNARE complex with BET1, STX5 and YKT6, in a SNARE complex with BET1L, STX5 and YKT6, in a SNARE complex with STX5, GOSR2, SEC22B and BET1, and in complex with STX5 and COG3. Interacts with GABARAPL2.

It is found in the golgi apparatus membrane. Functionally, involved in transport from the ER to the Golgi apparatus as well as in intra-Golgi transport. It belongs to a super-family of proteins called t-SNAREs or soluble NSF (N-ethylmaleimide-sensitive factor) attachment protein receptor. May play a protective role against hydrogen peroxide induced cytotoxicity under glutathione depleted conditions in neuronal cells by regulating the intracellular ROS levels via inhibition of p38 MAPK (MAPK11, MAPK12, MAPK13 and MAPK14). Participates in docking and fusion stage of ER to cis-Golgi transport. Plays an important physiological role in VLDL-transport vesicle-Golgi fusion and thus in VLDL delivery to the hepatic cis-Golgi. The polypeptide is Golgi SNAP receptor complex member 1 (GOSR1) (Bos taurus (Bovine)).